Here is a 474-residue protein sequence, read N- to C-terminus: Glutamate--tRNA ligase (474 aa).

The 'HIGH' region motif lies at 9–19 (PSPTGYLHVGG). The short motif at 240-244 (KLSKR) is the 'KMSKS' region element. Lysine 243 is a binding site for ATP.

This sequence belongs to the class-I aminoacyl-tRNA synthetase family. Glutamate--tRNA ligase type 1 subfamily. In terms of assembly, monomer.

The protein resides in the cytoplasm. It carries out the reaction tRNA(Glu) + L-glutamate + ATP = L-glutamyl-tRNA(Glu) + AMP + diphosphate. Functionally, catalyzes the attachment of glutamate to tRNA(Glu) in a two-step reaction: glutamate is first activated by ATP to form Glu-AMP and then transferred to the acceptor end of tRNA(Glu). The chain is Glutamate--tRNA ligase from Aliivibrio fischeri (strain MJ11) (Vibrio fischeri).